The primary structure comprises 448 residues: Probable glycine dehydrogenase (decarboxylating) subunit 1 (448 aa).

It belongs to the GcvP family. N-terminal subunit subfamily. In terms of assembly, the glycine cleavage system is composed of four proteins: P, T, L and H. In this organism, the P 'protein' is a heterodimer of two subunits.

It catalyses the reaction N(6)-[(R)-lipoyl]-L-lysyl-[glycine-cleavage complex H protein] + glycine + H(+) = N(6)-[(R)-S(8)-aminomethyldihydrolipoyl]-L-lysyl-[glycine-cleavage complex H protein] + CO2. Its function is as follows. The glycine cleavage system catalyzes the degradation of glycine. The P protein binds the alpha-amino group of glycine through its pyridoxal phosphate cofactor; CO(2) is released and the remaining methylamine moiety is then transferred to the lipoamide cofactor of the H protein. This Staphylococcus aureus (strain USA300) protein is Probable glycine dehydrogenase (decarboxylating) subunit 1.